Here is a 96-residue protein sequence, read N- to C-terminus: Glutamyl-tRNA(Gln) amidotransferase subunit C (96 aa).

The protein belongs to the GatC family. As to quaternary structure, heterotrimer of A, B and C subunits.

The catalysed reaction is L-glutamyl-tRNA(Gln) + L-glutamine + ATP + H2O = L-glutaminyl-tRNA(Gln) + L-glutamate + ADP + phosphate + H(+). It carries out the reaction L-aspartyl-tRNA(Asn) + L-glutamine + ATP + H2O = L-asparaginyl-tRNA(Asn) + L-glutamate + ADP + phosphate + 2 H(+). Functionally, allows the formation of correctly charged Asn-tRNA(Asn) or Gln-tRNA(Gln) through the transamidation of misacylated Asp-tRNA(Asn) or Glu-tRNA(Gln) in organisms which lack either or both of asparaginyl-tRNA or glutaminyl-tRNA synthetases. The reaction takes place in the presence of glutamine and ATP through an activated phospho-Asp-tRNA(Asn) or phospho-Glu-tRNA(Gln). In Pseudomonas aeruginosa (strain ATCC 15692 / DSM 22644 / CIP 104116 / JCM 14847 / LMG 12228 / 1C / PRS 101 / PAO1), this protein is Glutamyl-tRNA(Gln) amidotransferase subunit C.